A 341-amino-acid polypeptide reads, in one-letter code: Ferrochelatase (341 aa).

Fe cation contacts are provided by His-210 and Glu-291.

The protein belongs to the ferrochelatase family.

The protein resides in the cytoplasm. The enzyme catalyses heme b + 2 H(+) = protoporphyrin IX + Fe(2+). It functions in the pathway porphyrin-containing compound metabolism; protoheme biosynthesis; protoheme from protoporphyrin-IX: step 1/1. Functionally, catalyzes the ferrous insertion into protoporphyrin IX. The sequence is that of Ferrochelatase from Alcanivorax borkumensis (strain ATCC 700651 / DSM 11573 / NCIMB 13689 / SK2).